The sequence spans 125 residues: Small ribosomal subunit protein uS13 (125 aa).

The segment at 95–125 (GLPVNGQRTRTNARTRKGGKKTVANKKKVTK) is disordered. Residues 105–125 (TNARTRKGGKKTVANKKKVTK) are compositionally biased toward basic residues.

The protein belongs to the universal ribosomal protein uS13 family. As to quaternary structure, part of the 30S ribosomal subunit. Forms a loose heterodimer with protein S19. Forms two bridges to the 50S subunit in the 70S ribosome.

In terms of biological role, located at the top of the head of the 30S subunit, it contacts several helices of the 16S rRNA. In the 70S ribosome it contacts the 23S rRNA (bridge B1a) and protein L5 of the 50S subunit (bridge B1b), connecting the 2 subunits; these bridges are implicated in subunit movement. Contacts the tRNAs in the A and P-sites. This is Small ribosomal subunit protein uS13 from Leptospira borgpetersenii serovar Hardjo-bovis (strain L550).